We begin with the raw amino-acid sequence, 179 residues long: Peptide deformylase 2 (179 aa).

Fe cation is bound by residues C101 and H143. E144 is a catalytic residue. H147 lines the Fe cation pocket.

Belongs to the polypeptide deformylase family. Requires Fe(2+) as cofactor.

The enzyme catalyses N-terminal N-formyl-L-methionyl-[peptide] + H2O = N-terminal L-methionyl-[peptide] + formate. Removes the formyl group from the N-terminal Met of newly synthesized proteins. Requires at least a dipeptide for an efficient rate of reaction. N-terminal L-methionine is a prerequisite for activity but the enzyme has broad specificity at other positions. This chain is Peptide deformylase 2, found in Pseudomonas syringae pv. tomato (strain ATCC BAA-871 / DC3000).